Consider the following 530-residue polypeptide: Light-independent protochlorophyllide reductase subunit B (530 aa).

Asp-36 is a [4Fe-4S] cluster binding site. Residue Asp-290 is the Proton donor of the active site. Residue 425–426 participates in substrate binding; the sequence is GL.

The protein belongs to the ChlB/BchB/BchZ family. As to quaternary structure, protochlorophyllide reductase is composed of three subunits; ChlL, ChlN and ChlB. Forms a heterotetramer of two ChlB and two ChlN subunits. [4Fe-4S] cluster is required as a cofactor.

It carries out the reaction chlorophyllide a + oxidized 2[4Fe-4S]-[ferredoxin] + 2 ADP + 2 phosphate = protochlorophyllide a + reduced 2[4Fe-4S]-[ferredoxin] + 2 ATP + 2 H2O. It participates in porphyrin-containing compound metabolism; chlorophyll biosynthesis (light-independent). Component of the dark-operative protochlorophyllide reductase (DPOR) that uses Mg-ATP and reduced ferredoxin to reduce ring D of protochlorophyllide (Pchlide) to form chlorophyllide a (Chlide). This reaction is light-independent. The NB-protein (ChlN-ChlB) is the catalytic component of the complex. The chain is Light-independent protochlorophyllide reductase subunit B from Synechococcus sp. (strain WH7803).